A 598-amino-acid polypeptide reads, in one-letter code: Nuclear receptor subfamily 4 group A member 1 (598 aa).

2 disordered regions span residues 1–50 and 120–159; these read MPCI…PTAL and LDET…GSFG. 2 stretches are compositionally biased toward low complexity: residues 37 to 50 and 134 to 145; these read LASP…PTAL and SPCSAPSPSTPS. Residues 171-466 are required for nuclear import; that stretch reads RAWTEQLPKA…PAEGKLIFCS (296 aa). The segment at residues 264–339 is a DNA-binding region (nuclear receptor); sequence EGRCAVCGDN…VGMVKEVVRT (76 aa). NR C4-type zinc fingers lie at residues 267–287 and 303–327; these read CAVC…CEGC and CLAN…FQKC. Residues 268–354 are required for binding NBRE-containing DNA; that stretch reads AVCGDNASCQ…RRGRLPSKPK (87 aa). Positions 299–361 are required for the interaction with RXRA; sequence AKYICLANKD…KPKQPPDASP (63 aa). S341 carries the post-translational modification Phosphoserine; by PKA. Residues 341–361 are disordered; that stretch reads SLKGRRGRLPSKPKQPPDASP. S351 is subject to Phosphoserine; by PKA, RPS6KA1 and RPS6KA3. The NR LBD domain maps to 360-595; the sequence is SPANLLTSLV…PIVDKIFMDT (236 aa). The tract at residues 521 to 544 is binds lipopolysaccharide; the sequence is PRRVEELQNRIASCLKEHVSAVAG. The AF-2 stretch occupies residues 584 to 595; the sequence is PPPIVDKIFMDT.

This sequence belongs to the nuclear hormone receptor family. NR4 subfamily. As to quaternary structure, binds the NGFI-B response element (NBRE) as a monomer. Binds the Nur response element (NurRE), consisting of two inverse NBRE-related octanucleotide repeats separated by 6 base-pairs, as a dimer. Interacts (via N-terminus) with NLRP3 (via LRR repeat domain); the interaction is direct, requires binding of NR4A1/Nur77 to NBRE-containing dsDNA and lipopolysaccharide, and leads to non-canonical NLRP3 inflammasome activation. Interacts with GADD45GIP1. Interacts with STK11. Heterodimer (via DNA-binding domain) with RXRA (via C-terminus); DNA-binding of the heterodimer is enhanced by 9-cis retinoic acid. Competes for the RXRA interaction with EP300 and thereby attenuates EP300 mediated acetylation of RXRA. Interacts with NCOA1. Interacts with NCOA2. Interacts with NCOA3. It depends on Zn(2+) as a cofactor. Phosphorylated at Ser-351 by RPS6KA1 and RPS6KA3 in response to mitogenic or stress stimuli. Post-translationally, acetylated by p300/CBP, acetylation increases stability. Deacetylated by HDAC1.

It is found in the cytoplasm. It localises to the cytosol. Its subcellular location is the nucleus. The protein localises to the mitochondrion. Functionally, orphan nuclear receptor. Binds the NGFI-B response element (NBRE) 5'-AAAGGTCA-3'. Binds 9-cis-retinoic acid outside of its ligand-binding (NR LBD) domain. Participates in energy homeostasis by sequestrating the kinase STK11 in the nucleus, thereby attenuating cytoplasmic AMPK activation. Regulates the inflammatory response in macrophages by regulating metabolic adaptations during inflammation, including repressing the transcription of genes involved in the citric acid cycle (TCA). Inhibits NF-kappa-B signaling by binding to low-affinity NF-kappa-B binding sites, such as at the IL2 promoter. May act concomitantly with NR4A2 in regulating the expression of delayed-early genes during liver regeneration. Plays a role in the vascular response to injury. In terms of biological role, in the cytosol, upon its detection of both bacterial lipopolysaccharide (LPS) and NBRE-containing mitochondrial DNA released by GSDMD pores during pyroptosis, it promotes non-canonical NLRP3 inflammasome activation by stimulating association of NLRP3 and NEK7. This Canis lupus familiaris (Dog) protein is Nuclear receptor subfamily 4 group A member 1 (NR4A1).